The primary structure comprises 369 residues: Peptide chain release factor 2 (369 aa).

Q251 is subject to N5-methylglutamine.

The protein belongs to the prokaryotic/mitochondrial release factor family. In terms of processing, methylated by PrmC. Methylation increases the termination efficiency of RF2.

Its subcellular location is the cytoplasm. Functionally, peptide chain release factor 2 directs the termination of translation in response to the peptide chain termination codons UGA and UAA. The chain is Peptide chain release factor 2 from Chlamydia trachomatis serovar A (strain ATCC VR-571B / DSM 19440 / HAR-13).